The primary structure comprises 544 residues: Methionine--tRNA ligase (544 aa).

The 'HIGH' region motif lies at 10–20 (PYANGSLHLGH). 4 residues coordinate Zn(2+): Cys141, Cys144, Cys153, and Cys156. The 'KMSKS' region signature appears at 329–333 (KLSTS). An ATP-binding site is contributed by Thr332.

The protein belongs to the class-I aminoacyl-tRNA synthetase family. MetG type 1 subfamily. Monomer. The cofactor is Zn(2+).

It localises to the cytoplasm. The enzyme catalyses tRNA(Met) + L-methionine + ATP = L-methionyl-tRNA(Met) + AMP + diphosphate. Functionally, is required not only for elongation of protein synthesis but also for the initiation of all mRNA translation through initiator tRNA(fMet) aminoacylation. The sequence is that of Methionine--tRNA ligase from Bacillus cereus (strain Q1).